Reading from the N-terminus, the 357-residue chain is Geranylgeranyl pyrophosphate synthase 11, chloroplastic (357 aa).

Residues 1–37 (MATTLSSSSLFIQFRGRRYNSLSSFNNLQKRTVLSLS) constitute a chloroplast transit peptide. 3 residues coordinate isopentenyl diphosphate: lysine 103, arginine 106, and histidine 135. 2 residues coordinate Mg(2+): aspartate 142 and aspartate 148. Arginine 153 lines the dimethylallyl diphosphate pocket. Arginine 154 serves as a coordination point for isopentenyl diphosphate. Dimethylallyl diphosphate contacts are provided by lysine 242, threonine 243, glutamine 280, lysine 297, and lysine 307.

The protein belongs to the FPP/GGPP synthase family. In terms of assembly, monomer. Requires Mg(2+) as cofactor.

Its subcellular location is the plastid. It localises to the chloroplast. The enzyme catalyses isopentenyl diphosphate + dimethylallyl diphosphate = (2E)-geranyl diphosphate + diphosphate. It carries out the reaction isopentenyl diphosphate + (2E)-geranyl diphosphate = (2E,6E)-farnesyl diphosphate + diphosphate. The catalysed reaction is isopentenyl diphosphate + (2E,6E)-farnesyl diphosphate = (2E,6E,10E)-geranylgeranyl diphosphate + diphosphate. It participates in isoprenoid biosynthesis; farnesyl diphosphate biosynthesis; farnesyl diphosphate from geranyl diphosphate and isopentenyl diphosphate: step 1/1. The protein operates within isoprenoid biosynthesis; geranyl diphosphate biosynthesis; geranyl diphosphate from dimethylallyl diphosphate and isopentenyl diphosphate: step 1/1. It functions in the pathway isoprenoid biosynthesis; geranylgeranyl diphosphate biosynthesis; geranylgeranyl diphosphate from farnesyl diphosphate and isopentenyl diphosphate: step 1/1. Functionally, catalyzes the trans-addition of the three molecules of IPP onto DMAPP to form geranylgeranyl pyrophosphate. The polypeptide is Geranylgeranyl pyrophosphate synthase 11, chloroplastic (Arabidopsis thaliana (Mouse-ear cress)).